Here is a 346-residue protein sequence, read N- to C-terminus: Ribosomal RNA small subunit methyltransferase H (346 aa).

Residues 47–49 (GGY), D65, F92, D113, and Q120 each bind S-adenosyl-L-methionine. The segment covering 270–279 (RGEAPSRRLP) has biased composition (basic and acidic residues). A disordered region spans residues 270–346 (RGEAPSRRLP…ALPQRAAKGR (77 aa)).

This sequence belongs to the methyltransferase superfamily. RsmH family.

It is found in the cytoplasm. The enzyme catalyses cytidine(1402) in 16S rRNA + S-adenosyl-L-methionine = N(4)-methylcytidine(1402) in 16S rRNA + S-adenosyl-L-homocysteine + H(+). Specifically methylates the N4 position of cytidine in position 1402 (C1402) of 16S rRNA. This is Ribosomal RNA small subunit methyltransferase H from Methylocella silvestris (strain DSM 15510 / CIP 108128 / LMG 27833 / NCIMB 13906 / BL2).